Here is a 364-residue protein sequence, read N- to C-terminus: Mannose-1-phosphate guanyltransferase (364 aa).

The protein belongs to the transferase hexapeptide repeat family.

It localises to the cytoplasm. It catalyses the reaction alpha-D-mannose 1-phosphate + GTP + H(+) = GDP-alpha-D-mannose + diphosphate. It participates in nucleotide-sugar biosynthesis; GDP-alpha-D-mannose biosynthesis; GDP-alpha-D-mannose from alpha-D-mannose 1-phosphate (GTP route): step 1/1. Involved in cell wall synthesis where it is required for glycosylation. Involved in cell cycle progression through cell-size checkpoint. The protein is Mannose-1-phosphate guanyltransferase (mpg1) of Emericella nidulans (strain FGSC A4 / ATCC 38163 / CBS 112.46 / NRRL 194 / M139) (Aspergillus nidulans).